Consider the following 697-residue polypeptide: Zinc finger protein 12 (697 aa).

Residue lysine 3 forms a Glycyl lysine isopeptide (Lys-Gly) (interchain with G-Cter in SUMO2) linkage. In terms of domain architecture, KRAB spans 8–79 (VSFKDVAVDF…EGEFLLQSYP (72 aa)). Glycyl lysine isopeptide (Lys-Gly) (interchain with G-Cter in SUMO2) cross-links involve residues lysine 98, lysine 179, lysine 182, lysine 209, lysine 215, lysine 224, lysine 239, and lysine 267. C2H2-type zinc fingers lie at residues 269-291 (YECSECGKSFCKKSKFIIHQRTH) and 297-319 (YECNQCGKSFCQKGTLTVHQRTH). Residues lysine 309, lysine 323, lysine 337, and lysine 365 each participate in a glycyl lysine isopeptide (Lys-Gly) (interchain with G-Cter in SUMO2) cross-link. 8 C2H2-type zinc fingers span residues 325–347 (YECNECGKNFYQKLHLIQHQRTH), 353–375 (YECSYCGKSFCQKTHLTQHQRTH), 381–403 (YVCHDCGKTFSQKSALNDHQKIH), 409–431 (YKCSECGKCFCRKSTLTTHLRTH), 437–459 (YECNECGKFFSRLSYLTVHYRTH), 465–487 (YECNECGKTFYLNSALMRHQRVH), 493–515 (YECNECGKLFSQLSYLTIHHRTH), and 521–543 (YECSECGKTFYQNSALCRHRRIH). Glycyl lysine isopeptide (Lys-Gly) (interchain with G-Cter in SUMO2) cross-links involve residues lysine 544 and lysine 547. C2H2-type zinc fingers lie at residues 549–571 (YECYICGKFFSQMSYLTIHHRIH), 577–599 (YECSECGKTFCQNSALNRHQRTH), 605–627 (YECYECGKCFSQMSYLTIHHRIH), 633–655 (FECNECGKAFSRMSYLTVHYRTH), and 661–683 (YECTECGKKFYHKSAFNSHQRIH).

This sequence belongs to the krueppel C2H2-type zinc-finger protein family. Widely expressed in various adult tissues and embryonic developmental stages (isoform 3).

The protein resides in the nucleus. Its function is as follows. Transcriptional repressor which suppresses activation protein 1 (AP-1)- and serum response element (SRE)-mediated transcriptional activity. This Homo sapiens (Human) protein is Zinc finger protein 12 (ZNF12).